Consider the following 457-residue polypeptide: MKGFLGLALLPLLTAASPVSVESIHNGAAPIISSMNSQEIPDSYIVVFKKHVDTSAAAAHHSWVQDIHSAVNGRMELKKRGLFGFDTDAFLGVKHSFHVAGSLMGYAGHFHEDVIEQVRRHPDVDYIEKDSEVHHFDSPSVEKNAPWGLARISHRDSLSFGTFNKYLYAEDGGEGVDAYVIDTGTNTDHVDFEGRASWGKTIPQGDEDVDGNGHGTHCSGTIAGKKYGVAKKANVYAVKVLRSNGSGTMSDVVKGVEWAAEAHIKKSKAAKDGKAKGFKGSVANMSLGGGSSRTLDLAVNAAVDAGMHFAVAAGNDNADACNYSPAAAEKAVTVGASTLADERAYFSNYGKCTDIFAPGLNILSTWIGSKYAVNTISGTSMASPHIAGLLAYYVSLQPSDDSAFAVEKITPKKLKEALITVATSGALTDIPSDTPNLLAWNGGGSSNYTDIVAQGGY.

Positions 1 to 16 are cleaved as a signal peptide; that stretch reads MKGFLGLALLPLLTAA. A propeptide spans 17–136 (removed in mature form); sequence SPVSVESIHN…IEKDSEVHHF (120 aa). An Inhibitor I9 domain is found at 43–134; sequence SYIVVFKKHV…DYIEKDSEVH (92 aa). Residues 146–457 form the Peptidase S8 domain; it reads PWGLARISHR…YTDIVAQGGY (312 aa). Active-site charge relay system residues include Asp182 and His214. 2 N-linked (GlcNAc...) asparagine glycosylation sites follow: Asn244 and Asn284. Ser380 acts as the Charge relay system in catalysis. The N-linked (GlcNAc...) asparagine glycan is linked to Asn447.

The protein belongs to the peptidase S8 family.

Its function is as follows. Serine protease. The sequence is that of Subtilisin-like serine protease Pen c 2 from Penicillium citrinum.